The following is a 101-amino-acid chain: Small ribosomal subunit protein uS10 (101 aa).

Belongs to the universal ribosomal protein uS10 family. In terms of assembly, part of the 30S ribosomal subunit.

In terms of biological role, involved in the binding of tRNA to the ribosomes. This is Small ribosomal subunit protein uS10 from Rhodococcus erythropolis (strain PR4 / NBRC 100887).